The sequence spans 490 residues: Cis-aconitate decarboxylase (490 aa).

It belongs to the PrpD family. Homodimer.

It is found in the mitochondrion. It carries out the reaction cis-aconitate + H(+) = itaconate + CO2. Involved in the production of itaconic acid, a soluble unsaturated dicarboxylic acid mainly produced from sugars. This is Cis-aconitate decarboxylase (cad1) from Aspergillus terreus (strain NIH 2624 / FGSC A1156).